A 98-amino-acid chain; its full sequence is Large ribosomal subunit protein uL23 (98 aa).

It belongs to the universal ribosomal protein uL23 family. In terms of assembly, part of the 50S ribosomal subunit. Contacts protein L29, and trigger factor when it is bound to the ribosome.

Its function is as follows. One of the early assembly proteins it binds 23S rRNA. One of the proteins that surrounds the polypeptide exit tunnel on the outside of the ribosome. Forms the main docking site for trigger factor binding to the ribosome. The chain is Large ribosomal subunit protein uL23 from Rickettsia felis (strain ATCC VR-1525 / URRWXCal2) (Rickettsia azadi).